Here is a 252-residue protein sequence, read N- to C-terminus: MAESKLVIGDRSFASRLIMGTGGATNLAVLEQALIASGTELTTVAIRRVDADGGTGLLDLLNRLGITPLPNTAGCRSAAEAVLTAQLAREALNTNWVKLEVIADERTLWPDAVELVRAAEQLVDDGFVVLPYTTDDPVLARRLEDTGCAAVMPLGSPIGTGLGIANPHNIEMIVAGARVPVVLDAGIGTASDAALAMELGCDAVLLASAVTRAADPPAMAAAMAAAVTAGYLARCAGRIPKRFWAQASSPAR.

The Schiff-base intermediate with DXP role is filled by K98. Residues G159, 185 to 186, and 207 to 208 each bind 1-deoxy-D-xylulose 5-phosphate; these read AG and AS.

It belongs to the ThiG family. In terms of assembly, homotetramer. Forms heterodimers with either ThiH or ThiS.

It localises to the cytoplasm. It carries out the reaction [ThiS sulfur-carrier protein]-C-terminal-Gly-aminoethanethioate + 2-iminoacetate + 1-deoxy-D-xylulose 5-phosphate = [ThiS sulfur-carrier protein]-C-terminal Gly-Gly + 2-[(2R,5Z)-2-carboxy-4-methylthiazol-5(2H)-ylidene]ethyl phosphate + 2 H2O + H(+). Its pathway is cofactor biosynthesis; thiamine diphosphate biosynthesis. In terms of biological role, catalyzes the rearrangement of 1-deoxy-D-xylulose 5-phosphate (DXP) to produce the thiazole phosphate moiety of thiamine. Sulfur is provided by the thiocarboxylate moiety of the carrier protein ThiS. In vitro, sulfur can be provided by H(2)S. The polypeptide is Thiazole synthase (thiG) (Mycobacterium bovis (strain ATCC BAA-935 / AF2122/97)).